The chain runs to 166 residues: MAKTLSKPASGALAPWLGISLIVILFDQLSKIAILKTFAYGAQHALTSFFSLVLVYNRGAAFGFLSTASGWQRWAFTALGIGATLVICFLLRRHGQQRLFSLSLALILGGALGNVIDRLVYGHVIDFLDFHVGGWHFPAFNLADSAITVGAVLLVYDELRRVRGSR.

The next 4 membrane-spanning stretches (helical) occupy residues 9 to 29, 45 to 65, 71 to 91, and 100 to 120; these read ASGA…FDQL, ALTS…FGFL, WQRW…CFLL, and FSLS…DRLV. Residues Asp126 and Asp144 contribute to the active site. Residues 135-155 traverse the membrane as a helical segment; it reads WHFPAFNLADSAITVGAVLLV.

It belongs to the peptidase A8 family.

The protein localises to the cell inner membrane. It carries out the reaction Release of signal peptides from bacterial membrane prolipoproteins. Hydrolyzes -Xaa-Yaa-Zaa-|-(S,diacylglyceryl)Cys-, in which Xaa is hydrophobic (preferably Leu), and Yaa (Ala or Ser) and Zaa (Gly or Ala) have small, neutral side chains.. It participates in protein modification; lipoprotein biosynthesis (signal peptide cleavage). Functionally, this protein specifically catalyzes the removal of signal peptides from prolipoproteins. In Burkholderia ambifaria (strain MC40-6), this protein is Lipoprotein signal peptidase.